The following is a 116-amino-acid chain: Large ribosomal subunit protein bL20 (116 aa).

Belongs to the bacterial ribosomal protein bL20 family.

Binds directly to 23S ribosomal RNA and is necessary for the in vitro assembly process of the 50S ribosomal subunit. It is not involved in the protein synthesizing functions of that subunit. This is Large ribosomal subunit protein bL20 from Helicobacter pylori (strain Shi470).